Consider the following 404-residue polypeptide: Methyltransferase-like protein 22 (404 aa).

2 disordered regions span residues 60–102 (TDSG…SLQA) and 115–145 (QLDEDGDLDVVRRPRAASDSNPAGPLRDKVH). Basic and acidic residues predominate over residues 68–78 (SHRDVHTKEPP). The span at 79–88 (SAETGSTGSP) shows a compositional bias: low complexity. Residue Ser-132 is modified to Phosphoserine.

It belongs to the methyltransferase superfamily. METTL22 family. Interacts with members of the heat shock protein 90 and 70 families; these proteins probably are methylation substrates.

The protein resides in the nucleus. It catalyses the reaction L-lysyl-[protein] + 3 S-adenosyl-L-methionine = N(6),N(6),N(6)-trimethyl-L-lysyl-[protein] + 3 S-adenosyl-L-homocysteine + 3 H(+). In terms of biological role, protein N-lysine methyltransferase. Trimethylates KIN at Lys-135 (in vitro). The chain is Methyltransferase-like protein 22 (METTL22) from Homo sapiens (Human).